We begin with the raw amino-acid sequence, 277 residues long: Large ribosomal subunit protein uL2 (277 aa).

Disordered stretches follow at residues 37 to 60 (KNST…GHKH) and 223 to 264 (VVMN…NKRT). The segment covering 39–49 (STAGRNNNGHI) has biased composition (polar residues). Positions 50–60 (TTRHKGGGHKH) are enriched in basic residues. A compositionally biased stretch (basic and acidic residues) spans 229-244 (DHPHGGGEGRTGEARE).

Belongs to the universal ribosomal protein uL2 family. Part of the 50S ribosomal subunit. Forms a bridge to the 30S subunit in the 70S ribosome.

Its function is as follows. One of the primary rRNA binding proteins. Required for association of the 30S and 50S subunits to form the 70S ribosome, for tRNA binding and peptide bond formation. It has been suggested to have peptidyltransferase activity; this is somewhat controversial. Makes several contacts with the 16S rRNA in the 70S ribosome. This Neisseria meningitidis serogroup B (strain ATCC BAA-335 / MC58) protein is Large ribosomal subunit protein uL2.